The primary structure comprises 617 residues: Glutamine--fructose-6-phosphate aminotransferase [isomerizing] (617 aa).

Cys2 (nucleophile; for GATase activity) is an active-site residue. Residues 2–222 (CGIIGLAFAE…DGEFGWISPE (221 aa)) enclose the Glutamine amidotransferase type-2 domain. SIS domains are found at residues 293-432 (AAGL…EAGR) and 466-607 (AASL…PDKP). Lys612 serves as the catalytic For Fru-6P isomerization activity.

Homodimer.

Its subcellular location is the cytoplasm. The catalysed reaction is D-fructose 6-phosphate + L-glutamine = D-glucosamine 6-phosphate + L-glutamate. In terms of biological role, catalyzes the first step in hexosamine metabolism, converting fructose-6P into glucosamine-6P using glutamine as a nitrogen source. This is Glutamine--fructose-6-phosphate aminotransferase [isomerizing] from Aeropyrum pernix (strain ATCC 700893 / DSM 11879 / JCM 9820 / NBRC 100138 / K1).